The following is a 290-amino-acid chain: BEL1-like homeodomain protein 11 (290 aa).

Residues 20–36 are SR/KY domain; the sequence is SRYAKAVQCLVEEVIDI. The BELL domain stretch occupies residues 81 to 152; that stretch reads ENHEIHIKIT…SLEEAIISQL (72 aa). A DNA-binding region (homeobox) is located at residues 202 to 264; the sequence is AWKPIRGLPE…NARVRLWKPM (63 aa).

The protein belongs to the TALE/BELL homeobox family. May form heterodimeric complexes with TALE/KNOX proteins.

Its subcellular location is the nucleus. The sequence is that of BEL1-like homeodomain protein 11 (BLH11) from Arabidopsis thaliana (Mouse-ear cress).